The sequence spans 333 residues: 5-formaminoimidazole-4-carboxamide-1-(beta)-D-ribofuranosyl 5'-monophosphate synthetase (333 aa).

The 5-amino-1-(5-phospho-beta-D-ribosyl)imidazole-4-carboxamide site is built by H10 and S70. In terms of domain architecture, ATP-grasp spans 91-324 (KEVLKWESDR…IAREIKIAIE (234 aa)). ATP-binding positions include 121–181 (PDDI…VPIY) and E203. N231 lines the 5-amino-1-(5-phospho-beta-D-ribosyl)imidazole-4-carboxamide pocket. Mg(2+) is bound by residues E269 and E282.

Belongs to the phosphohexose mutase family. It depends on Mg(2+) as a cofactor. The cofactor is Mn(2+).

The enzyme catalyses 5-amino-1-(5-phospho-beta-D-ribosyl)imidazole-4-carboxamide + formate + ATP = 5-formamido-1-(5-phospho-D-ribosyl)imidazole-4-carboxamide + ADP + phosphate. Its pathway is purine metabolism; IMP biosynthesis via de novo pathway; 5-formamido-1-(5-phospho-D-ribosyl)imidazole-4-carboxamide from 5-amino-1-(5-phospho-D-ribosyl)imidazole-4-carboxamide (formate route): step 1/1. In terms of biological role, catalyzes the ATP- and formate-dependent formylation of 5-aminoimidazole-4-carboxamide-1-beta-d-ribofuranosyl 5'-monophosphate (AICAR) to 5-formaminoimidazole-4-carboxamide-1-beta-d-ribofuranosyl 5'-monophosphate (FAICAR) in the absence of folates. This is 5-formaminoimidazole-4-carboxamide-1-(beta)-D-ribofuranosyl 5'-monophosphate synthetase from Pyrococcus horikoshii (strain ATCC 700860 / DSM 12428 / JCM 9974 / NBRC 100139 / OT-3).